Reading from the N-terminus, the 308-residue chain is Glutaminase (308 aa).

Substrate is bound by residues S66, N117, E161, N168, Y192, Y244, and V262.

It belongs to the glutaminase family. In terms of assembly, homotetramer.

The enzyme catalyses L-glutamine + H2O = L-glutamate + NH4(+). This chain is Glutaminase, found in Salmonella dublin (strain CT_02021853).